The following is a 692-amino-acid chain: Putative clathrin assembly protein At1g14910 (692 aa).

An ENTH domain is found at 24–161 (RVNSDYAELD…ECFRVLKYDI (138 aa)). The segment at 325–383 (YTPDDGLTSEDVGPSHEEHETSSPSDSAVVPSEETQLSSQSPPSVETPQNFIDTDDLLG) is disordered. Residues 357–376 (EETQLSSQSPPSVETPQNFI) are compositionally biased toward polar residues. Ser363 carries the phosphoserine modification. Repeat unit 1 spans residues 532 to 548 (FGEFPIVPVSEPQSTTS). The tract at residues 532 to 666 (FGEFPIVPVS…PVSEPQNTTG (135 aa)) is 8 X 17 AA approximate tandem repeats. Residues 549-564 (FGAFPVPVSEPSNTTG) form a 2; truncated repeat. A run of 6 repeats spans residues 565 to 581 (FGEIPVVPVTEPPNTTA), 582 to 598 (FGEFPVVPVSEPQNITG), 599 to 615 (FGALPVTPASEPSNTTG), 616 to 632 (FGEFPVVSVSAPQNTTG), 633 to 649 (FGALPVIPVSEPSKTTG), and 650 to 666 (LGEFPVVPVSEPQNTTG).

Expressed in the whole plant.

Its subcellular location is the membrane. The protein localises to the clathrin-coated pit. It localises to the golgi apparatus. It is found in the cytoplasmic vesicle. The protein resides in the clathrin-coated vesicle. This Arabidopsis thaliana (Mouse-ear cress) protein is Putative clathrin assembly protein At1g14910.